Here is a 475-residue protein sequence, read N- to C-terminus: Bifunctional protein HldE (475 aa).

Positions 1–318 are ribokinase; that stretch reads MIQYSSKFNN…ENAIHHREET (318 aa). 195-198 contributes to the ATP binding site; sequence NMSE. Asp-264 is an active-site residue. The tract at residues 344-475 is cytidylyltransferase; the sequence is MTNGCFDILH…NVIKKIQASK (132 aa).

The protein in the N-terminal section; belongs to the carbohydrate kinase PfkB family. This sequence in the C-terminal section; belongs to the cytidylyltransferase family. In terms of assembly, homodimer.

The enzyme catalyses D-glycero-beta-D-manno-heptose 7-phosphate + ATP = D-glycero-beta-D-manno-heptose 1,7-bisphosphate + ADP + H(+). It carries out the reaction D-glycero-beta-D-manno-heptose 1-phosphate + ATP + H(+) = ADP-D-glycero-beta-D-manno-heptose + diphosphate. Its pathway is nucleotide-sugar biosynthesis; ADP-L-glycero-beta-D-manno-heptose biosynthesis; ADP-L-glycero-beta-D-manno-heptose from D-glycero-beta-D-manno-heptose 7-phosphate: step 1/4. The protein operates within nucleotide-sugar biosynthesis; ADP-L-glycero-beta-D-manno-heptose biosynthesis; ADP-L-glycero-beta-D-manno-heptose from D-glycero-beta-D-manno-heptose 7-phosphate: step 3/4. It functions in the pathway bacterial outer membrane biogenesis; LPS core biosynthesis. Catalyzes the phosphorylation of D-glycero-D-manno-heptose 7-phosphate at the C-1 position to selectively form D-glycero-beta-D-manno-heptose-1,7-bisphosphate. Its function is as follows. Catalyzes the ADP transfer from ATP to D-glycero-beta-D-manno-heptose 1-phosphate, yielding ADP-D-glycero-beta-D-manno-heptose. The polypeptide is Bifunctional protein HldE (hldE) (Actinobacillus pleuropneumoniae (Haemophilus pleuropneumoniae)).